The chain runs to 512 residues: Acid-sensing ion channel 2 (512 aa).

The Cytoplasmic portion of the chain corresponds to 1-37 (MDLKESPSEGSLQPSSIQIFANTSTLHGIRHIFVYGP). Phosphoserine is present on residues Ser8 and Ser11. The chain crosses the membrane as a helical span at residues 38 to 58 (LTIRRVLWAVAFVGSLGLLLV). Over 59–427 (ESSERVSYYF…EQKKAYEVAA (369 aa)) the chain is Extracellular. Disulfide bonds link Cys92–Cys193, Cys289–Cys364, Cys307–Cys360, Cys311–Cys358, Cys320–Cys342, and Cys322–Cys334. N-linked (GlcNAc...) asparagine glycans are attached at residues Asn365 and Asn392. Residues 428 to 448 (LLGDIGGQMGLFIGASILTIL) form a helical membrane-spanning segment. The GAS motif; ion selectivity filter motif lies at 441 to 443 (GAS). Residues 449 to 512 (ELFDYIYELI…ALGTLEEIAC (64 aa)) are Cytoplasmic-facing.

The protein belongs to the amiloride-sensitive sodium channel (TC 1.A.6) family. ASIC2 subfamily. In terms of assembly, can form homotrimers. Heterotrimer; forms functional heterotrimers producing channel with different properties. Forms heterotrimers with ASIC1; while ASIC1 determines current amplitude, ASIC2 influences the properties of the current. Forms heterotrimers with ASIC3; resulting in channels with distinct properties. Interacts with STOM; STOM regulates the gating of ASIC2-containing channels. Interacts with PICK1; promotes ASIC3 phosphorylation by PKC and activation of ASIC2/ASIC3 heterotrimers. Expressed by sensory neurons. Expressed by nociceptive sensory neurons, spiral ganglion (SG) neurons and the retina (at protein level). Expressed in outer nuclear layer of retina (photoreceptors) and to a lower extent in distal and proximal inner nuclear layer.

Its subcellular location is the cell membrane. The catalysed reaction is Na(+)(in) = Na(+)(out). It catalyses the reaction K(+)(in) = K(+)(out). The enzyme catalyses Li(+)(in) = Li(+)(out). With respect to regulation, inhibited by the diuretic drug amiloride. Forms pH-gated trimeric sodium channels that act as postsynaptic excitatory sensors in the nervous system. Upon extracellular acidification, these channels generate rapid, transient inward currents that fully desensitize. Highly selective for sodium, they are permeable to other cations. By forming heterotrimeric channels with ASIC1, could contribute to synaptic plasticity, learning, and memory. Additionally, as acid sensors at nerve terminals, plays a role in mechanosensation and phototransduction. In terms of biological role, has no pH-gated sodium channel activity per se but can associate with other ASICs to produce functional channels with specific properties. The chain is Acid-sensing ion channel 2 from Mus musculus (Mouse).